We begin with the raw amino-acid sequence, 375 residues long: All-trans-retinol dehydrogenase [NAD(+)] ADH1B (375 aa).

Ser2 is modified (N-acetylserine). Ser23 is modified (phosphoserine). The residue at position 35 (Tyr35) is a Phosphotyrosine. 7 residues coordinate Zn(2+): Cys47, His68, Cys98, Cys101, Cys104, Cys112, and Cys175. NAD(+)-binding positions include 200 to 205, Asp224, Lys229, 293 to 295, and Arg370; these read GLGGVG and VGV.

Belongs to the zinc-containing alcohol dehydrogenase family. In terms of assembly, homodimer or heterodimer of closely related subunits. Zn(2+) serves as cofactor.

The protein resides in the cytoplasm. It catalyses the reaction all-trans-retinol + NAD(+) = all-trans-retinal + NADH + H(+). The enzyme catalyses all-trans-4-hydroxyretinol + NAD(+) = all-trans-4-hydroxyretinal + NADH + H(+). The catalysed reaction is all-trans-4-oxoretinol + NAD(+) = all-trans-4-oxoretinal + NADH + H(+). In terms of biological role, catalyzes the NAD-dependent oxidation of all-trans-retinol and its derivatives such as all-trans-4-hydroxyretinol and may participate in retinoid metabolism. In vitro can also catalyze the NADH-dependent reduction of all-trans-retinal and its derivatives such as all-trans-4-oxoretinal. Catalyzes in the oxidative direction with higher efficiency. Has the same affinity for all-trans-4-hydroxyretinol and all-trans-4-oxoretinal. The sequence is that of All-trans-retinol dehydrogenase [NAD(+)] ADH1B from Pan troglodytes (Chimpanzee).